Reading from the N-terminus, the 344-residue chain is Probable nicotinate-nucleotide adenylyltransferase/Ap4A hydrolase (344 aa).

Residues M1 to K182 form a naMN adenylyltransferase region. An ap4A hydrolase region spans residues E191–N344. The HD domain maps to R193–M304. H196 contributes to the ADP binding site. H196, H225, and D226 together coordinate Fe cation. Residues D226–K229, H255, H281–T282, D299, and R305 contribute to the ADP site. D299 lines the Fe cation pocket.

The protein in the N-terminal section; belongs to the NadD family. This sequence in the C-terminal section; belongs to the Ap4A hydrolase YqeK family.

The enzyme catalyses nicotinate beta-D-ribonucleotide + ATP + H(+) = deamido-NAD(+) + diphosphate. It catalyses the reaction P(1),P(4)-bis(5'-adenosyl) tetraphosphate + H2O = 2 ADP + 2 H(+). It functions in the pathway cofactor biosynthesis; NAD(+) biosynthesis; deamido-NAD(+) from nicotinate D-ribonucleotide: step 1/1. In terms of biological role, catalyzes the reversible adenylation of nicotinate mononucleotide (NaMN) to nicotinic acid adenine dinucleotide (NaAD). Hydrolyzes diadenosine 5',5'''-P1,P4-tetraphosphate (Ap4A) to yield ADP. This is Probable nicotinate-nucleotide adenylyltransferase/Ap4A hydrolase from Mycoplasma pneumoniae (strain ATCC 29342 / M129 / Subtype 1) (Mycoplasmoides pneumoniae).